The primary structure comprises 368 residues: tRNA-specific 2-thiouridylase MnmA (368 aa).

ATP is bound by residues 10–17 (AMSGGIDS) and Met-36. Cys-106 functions as the Nucleophile in the catalytic mechanism. Cys-106 and Cys-203 are oxidised to a cystine. Position 130 (Gly-130) interacts with ATP. An interaction with tRNA region spans residues 152 to 154 (KDQ). The active-site Cysteine persulfide intermediate is Cys-203. Residues 313–314 (RY) are interaction with tRNA.

Belongs to the MnmA/TRMU family.

The protein resides in the cytoplasm. The enzyme catalyses S-sulfanyl-L-cysteinyl-[protein] + uridine(34) in tRNA + AH2 + ATP = 2-thiouridine(34) in tRNA + L-cysteinyl-[protein] + A + AMP + diphosphate + H(+). In terms of biological role, catalyzes the 2-thiolation of uridine at the wobble position (U34) of tRNA, leading to the formation of s(2)U34. In Cytophaga hutchinsonii (strain ATCC 33406 / DSM 1761 / CIP 103989 / NBRC 15051 / NCIMB 9469 / D465), this protein is tRNA-specific 2-thiouridylase MnmA.